A 632-amino-acid polypeptide reads, in one-letter code: Probable electron transfer flavoprotein-ubiquinone oxidoreductase, mitochondrial (632 aa).

93–107 contributes to the FAD binding site; sequence VCIVGAGPAGLSAAI. Residues Cys-575, Cys-601, Cys-604, and Cys-607 each coordinate [4Fe-4S] cluster. The region spanning 592–621 is the 4Fe-4S ferredoxin-type domain; that stretch reads KRFVINSQNCVHCKTCDIKDPLQGIQWKTP.

Belongs to the ETF-QO/FixC family. The cofactor is [4Fe-4S] cluster. FAD is required as a cofactor.

The protein resides in the mitochondrion inner membrane. The catalysed reaction is a ubiquinone + reduced [electron-transfer flavoprotein] = a ubiquinol + oxidized [electron-transfer flavoprotein] + H(+). Accepts electrons from ETF and reduces ubiquinone. In Schizosaccharomyces pombe (strain 972 / ATCC 24843) (Fission yeast), this protein is Probable electron transfer flavoprotein-ubiquinone oxidoreductase, mitochondrial.